Reading from the N-terminus, the 252-residue chain is 2-succinyl-6-hydroxy-2,4-cyclohexadiene-1-carboxylate synthase (252 aa).

The protein belongs to the AB hydrolase superfamily. MenH family. Monomer.

The catalysed reaction is 5-enolpyruvoyl-6-hydroxy-2-succinyl-cyclohex-3-ene-1-carboxylate = (1R,6R)-6-hydroxy-2-succinyl-cyclohexa-2,4-diene-1-carboxylate + pyruvate. The protein operates within quinol/quinone metabolism; 1,4-dihydroxy-2-naphthoate biosynthesis; 1,4-dihydroxy-2-naphthoate from chorismate: step 3/7. It functions in the pathway quinol/quinone metabolism; menaquinone biosynthesis. Catalyzes a proton abstraction reaction that results in 2,5-elimination of pyruvate from 2-succinyl-5-enolpyruvyl-6-hydroxy-3-cyclohexene-1-carboxylate (SEPHCHC) and the formation of 2-succinyl-6-hydroxy-2,4-cyclohexadiene-1-carboxylate (SHCHC). The sequence is that of 2-succinyl-6-hydroxy-2,4-cyclohexadiene-1-carboxylate synthase from Salmonella paratyphi B (strain ATCC BAA-1250 / SPB7).